Here is a 614-residue protein sequence, read N- to C-terminus: DNA mismatch repair protein MutL (614 aa).

The protein belongs to the DNA mismatch repair MutL/HexB family.

In terms of biological role, this protein is involved in the repair of mismatches in DNA. It is required for dam-dependent methyl-directed DNA mismatch repair. May act as a 'molecular matchmaker', a protein that promotes the formation of a stable complex between two or more DNA-binding proteins in an ATP-dependent manner without itself being part of a final effector complex. The polypeptide is DNA mismatch repair protein MutL (Thermoanaerobacter sp. (strain X514)).